A 348-amino-acid polypeptide reads, in one-letter code: Phospho-2-dehydro-3-deoxyheptonate aldolase, Trp-sensitive (348 aa).

This sequence belongs to the class-I DAHP synthase family.

It catalyses the reaction D-erythrose 4-phosphate + phosphoenolpyruvate + H2O = 7-phospho-2-dehydro-3-deoxy-D-arabino-heptonate + phosphate. It functions in the pathway metabolic intermediate biosynthesis; chorismate biosynthesis; chorismate from D-erythrose 4-phosphate and phosphoenolpyruvate: step 1/7. Its function is as follows. Stereospecific condensation of phosphoenolpyruvate (PEP) and D-erythrose-4-phosphate (E4P) giving rise to 3-deoxy-D-arabino-heptulosonate-7-phosphate (DAHP). This is Phospho-2-dehydro-3-deoxyheptonate aldolase, Trp-sensitive (aroH) from Salmonella typhi.